Reading from the N-terminus, the 210-residue chain is Selenoprotein T2 (210 aa).

The N-terminal stretch at Met-1–Val-21 is a signal peptide. Residues Cys-62–Sec-65 constitute a cross-link (cysteinyl-selenocysteine (Cys-Sec)). A non-standard amino acid (selenocysteine) is located at residue Sec-65.

The protein belongs to the SelWTH family. Selenoprotein T subfamily. Post-translationally, may contain a selenide-sulfide bond between Cys-62 and Sec-65. This bond is speculated to serve as redox-active pair. Widely expressed in the embryo.

The chain is Selenoprotein T2 from Danio rerio (Zebrafish).